Reading from the N-terminus, the 522-residue chain is U4/U6 small nuclear ribonucleoprotein Prp4 (522 aa).

A compositionally biased stretch (polar residues) spans 1–13 (MASSRASSTQATK). The disordered stretch occupies residues 1–20 (MASSRASSTQATKTKAPDDL). N6-acetyllysine is present on Lys27. WD repeat units follow at residues 229–268 (GDDR…LLHT), 271–318 (GHNT…PVAD), 321–360 (GHTV…EILH), 363–402 (GHSM…CIMF), 405–444 (GHLK…CVYT), 447–487 (AHQN…PLKT), and 490–521 (GHEG…LWMA).

As to quaternary structure, component of the precatalytic spliceosome (spliceosome B complex). Component of the U4/U6-U5 tri-snRNP complex, a building block of the precatalytic spliceosome (spliceosome B complex). The U4/U6-U5 tri-snRNP complex is composed of the U4, U6 and U5 snRNAs and at least PRPF3, PRPF4, PRPF6, PRPF8, PRPF31, SNRNP200, TXNL4A, SNRNP40, SNRPB, SNRPD1, SNRPD2, SNRPD3, SNRPE, SNRPF, SNRPG, DDX23, CD2BP2, PPIH, SNU13, EFTUD2, SART1 and USP39, plus LSM2, LSM3, LSM4, LSM5, LSM6, LSM7 and LSM8. Interacts directly with PRPF18, PPIH and PRPF3. Part of a heteromeric complex containing PPIH, PRPF3 and PRPF4 that is stable in the absence of RNA. Interacts with ERCC6.

It localises to the nucleus. It is found in the nucleus speckle. In terms of biological role, plays a role in pre-mRNA splicing as component of the U4/U6-U5 tri-snRNP complex that is involved in spliceosome assembly, and as component of the precatalytic spliceosome (spliceosome B complex). This Homo sapiens (Human) protein is U4/U6 small nuclear ribonucleoprotein Prp4 (PRPF4).